Consider the following 956-residue polypeptide: Probable hypoxanthine oxidase XdhD (956 aa).

Glutamine 414, phenylalanine 445, and alanine 727 together coordinate Mo-molybdopterin.

This sequence belongs to the xanthine dehydrogenase family. [2Fe-2S] cluster is required as a cofactor. The cofactor is Mo-molybdopterin.

Functionally, probably has no xanthine dehydrogenase activity; however deletion results in increased adenine sensitivity, suggesting that this protein contributes to the conversion of adenine to guanine nucleotides during purine salvage. The protein is Probable hypoxanthine oxidase XdhD (xdhD) of Escherichia coli O157:H7.